A 1979-amino-acid chain; its full sequence is Myosin-11 (1979 aa).

S2 carries the post-translational modification Blocked amino end (Ser). The 51-residue stretch at 30–80 (SAKKLVWVPSEKHGFEAASIKEEKGDEVTVELQENGKKVTLSKDDIQKMNP) folds into the Myosin N-terminal SH3-like domain. Positions 84–789 (SKVEDMAELT…VLAHLEEERD (706 aa)) constitute a Myosin motor domain. At K128 the chain carries N6,N6,N6-trimethyllysine. 177 to 184 (GESGAGKT) provides a ligand contact to ATP. Actin-binding regions lie at residues 667-689 (LTKL…IPNH) and 768-782 (RIGQ…GVLA). In terms of domain architecture, IQ spans 792 to 821 (ITDVIIAFQAQCRGYLARKAFAKRQQQLTA). A rodlike tail (S2 and LMM domains) region spans residues 850-1979 (LLQVTRQEEE…DGDFNGKASE (1130 aa)). Positions 850–1979 (LLQVTRQEEE…DGDFNGKASE (1130 aa)) form a coiled coil. Disordered stretches follow at residues 1130–1150 (QEDL…KRDL), 1709–1736 (RKQA…LQDE), and 1891–1979 (QLEE…KASE). Positions 1135-1150 (SEKAARNKAEKQKRDL) are enriched in basic and acidic residues. Basic and acidic residues predominate over residues 1968–1979 (GRDGDFNGKASE).

It belongs to the TRAFAC class myosin-kinesin ATPase superfamily. Myosin family. Muscle myosin is a hexameric protein that consists of 2 heavy chain subunits (MHC), 2 alkali light chain subunits (MLC) and 2 regulatory light chain subunits (MLC-2).

Its subcellular location is the cytoplasm. It localises to the myofibril. Muscle contraction. The polypeptide is Myosin-11 (MYH11) (Gallus gallus (Chicken)).